We begin with the raw amino-acid sequence, 757 residues long: 5-methyltetrahydropteroyltriglutamate--homocysteine methyltransferase (757 aa).

5-methyltetrahydropteroyltri-L-glutamate contacts are provided by residues 17-20 and K117; that span reads RELK. L-homocysteine contacts are provided by residues 434–436 and E487; that span reads IGS. L-methionine is bound by residues 434 to 436 and E487; that span reads IGS. Residues 518–519 and W564 each bind 5-methyltetrahydropteroyltri-L-glutamate; that span reads RC. D602 serves as a coordination point for L-homocysteine. Residue D602 coordinates L-methionine. E608 is a binding site for 5-methyltetrahydropteroyltri-L-glutamate. H644, C646, and E668 together coordinate Zn(2+). The Proton donor role is filled by H697. C729 contributes to the Zn(2+) binding site.

This sequence belongs to the vitamin-B12 independent methionine synthase family. Requires Zn(2+) as cofactor.

The enzyme catalyses 5-methyltetrahydropteroyltri-L-glutamate + L-homocysteine = tetrahydropteroyltri-L-glutamate + L-methionine. It functions in the pathway amino-acid biosynthesis; L-methionine biosynthesis via de novo pathway; L-methionine from L-homocysteine (MetE route): step 1/1. Its function is as follows. Catalyzes the transfer of a methyl group from 5-methyltetrahydrofolate to homocysteine resulting in methionine formation. In Proteus mirabilis (strain HI4320), this protein is 5-methyltetrahydropteroyltriglutamate--homocysteine methyltransferase.